A 442-amino-acid polypeptide reads, in one-letter code: GDP-L-galactose phosphorylase 1 (442 aa).

His-238 functions as the Tele-GMP-histidine intermediate in the catalytic mechanism.

The protein belongs to the GDPGP1 family. In terms of assembly, interacts with TLP1. Expressed in leaves, stems, roots, flowers and siliques. Highest expression in green tissues.

The protein localises to the cytoplasm. Its subcellular location is the nucleus. It carries out the reaction GDP-beta-L-galactose + phosphate = beta-L-galactose 1-phosphate + GDP + H(+). It participates in cofactor biosynthesis; L-ascorbate biosynthesis via GDP-alpha-D-mannose pathway; L-ascorbate from GDP-alpha-D-mannose: step 2/5. With respect to regulation, not inhibited by dithiothreitol, N-ethylmaleimide, phenylmethane sulfonyl fluoride, ascorbate, L-galactose and L-galactonolactone. Catalyzes a reaction of the Smirnoff-Wheeler pathway, the major route to ascorbate biosynthesis in plants. Acts as a phosphorylase rather than as a transferase. Uses preferentially GDP-L-galactose and GDP-D-glucose as substrates. Lower activity with GDP-L-fucose, very low activity with GDP-D-mannose, and no activity with UDP-D-glucose, UDP-D-galactose or ADP-D-glucose. Highly specific for inorganic phosphate as the guanylyl acceptor. The polypeptide is GDP-L-galactose phosphorylase 1 (VTC2) (Arabidopsis thaliana (Mouse-ear cress)).